Here is a 498-residue protein sequence, read N- to C-terminus: Phosphonates import ATP-binding protein PhnC (498 aa).

The tract at residues 1-27 (MPQRPEAARAGPVAGPDAASKPAPGPA) is disordered. One can recognise an ABC transporter domain in the interval 28 to 269 (LTLRGAGRAY…DLGELYEARR (242 aa)). 60–67 (GPSGAGKS) contacts ATP. A lysR substrate binding domain region spans residues 270–498 (GAADPARAPA…LEVARAEVPP (229 aa)).

The protein belongs to the ABC transporter superfamily. Phosphonates importer (TC 3.A.1.9.1) family. The complex is composed of two ATP-binding proteins (PhnC), two transmembrane proteins (PhnE) and a solute-binding protein (PhnD).

It is found in the cell inner membrane. The catalysed reaction is phosphonate(out) + ATP + H2O = phosphonate(in) + ADP + phosphate + H(+). In terms of biological role, part of the ABC transporter complex PhnCDE involved in phosphonates import. Responsible for energy coupling to the transport system. The chain is Phosphonates import ATP-binding protein PhnC from Anaeromyxobacter dehalogenans (strain 2CP-C).